Consider the following 483-residue polypeptide: Prenyltransferase vrtC (483 aa).

It belongs to the tryptophan dimethylallyltransferase family.

The protein operates within secondary metabolite biosynthesis; terpenoid biosynthesis. Its function is as follows. Prenyltransferase; part of the gene cluster that mediates the biosynthesis of viridicatumtoxin, a tetracycline-like fungal meroterpenoid with a unique, fused spirobicyclic ring system. The first step of the pathway is the production of the malonamoyl-CoA starter unit for the polyketide synthase vrtA. The aldolase vrtJ may be involved in the synthesis of the malonamate substrate for malonamoyl-CoA synthetase vrtB. The polyketide synthase vrtA then may utilize the malonamoyl-CoA starter unit, followed by sequential condensation of eight malonyl-CoA units to form the polyketide backbone. The cyclization of the last ring could be mediated by the lactamase-like protein vrtG. The proposed post-PKS tailoring steps are a hydroxylation at C5 catalyzed the cytochrome P450 monooxygenase vrtE, a hydroxylation at C12a catalyzed by VrtH and/or VrtI, and an O-methylation by the O-methyltransferase vrtF. VrtC is then proposed to catalyze the transfer of a geranyl group synthesized by vrtD to the aromatic C ring of the tetracyclic polyketide intermediate of viridicatumtoxin to yield previridicatumtoxin. Finally, the cytochrome P450 monooxygenase vrtK catalyzes the spirocyclization of the geranyl moiety of previridicatumtoxin to afford viridicatumtoxin. The polypeptide is Prenyltransferase vrtC (Penicillium aethiopicum).